The chain runs to 238 residues: Accessory gene regulator A (238 aa).

The region spanning 2-125 is the Response regulatory domain; it reads KIFICEDDPK…LRTRIIDCLE (124 aa). Residue D59 is modified to 4-aspartylphosphate. In terms of domain architecture, HTH LytTR-type spans 143–238; it reads IELKRGSNSV…YASVRNVKKI (96 aa).

It is found in the cytoplasm. Required for high-level post-exponential phase expression of a series of secreted proteins. This Staphylococcus aureus (strain COL) protein is Accessory gene regulator A (agrA).